Reading from the N-terminus, the 273-residue chain is Oligodendrocyte transcription factor 3 (273 aa).

A compositionally biased stretch (low complexity) spans 1–14; sequence MNSDSSSVSSRASS. Positions 1 to 72 are disordered; the sequence is MNSDSSSVSS…KAAGESSKYK (72 aa). Basic residues predominate over residues 24 to 34; sequence DHHHRHHHHHQ. The segment covering 37–47 has biased composition (polar residues); that stretch reads RLNSVSSTQGD. A coiled-coil region spans residues 69 to 90; that stretch reads SKYKIKKQLSEQDLQQLRLKIN. The 55-residue stretch at 84–138 folds into the bHLH domain; the sequence is QLRLKINGRERKRMHDLNLAMDGLREVMPYAHGPSVRKLSKIATLLLARNYILML.

As to expression, weakly expressed, mainly in non-neural tissues.

The protein localises to the nucleus. Its function is as follows. May determine the distinct specification program of class A neurons in the dorsal part of the spinal cord and suppress specification of class B neurons. This is Oligodendrocyte transcription factor 3 (Olig3) from Mus musculus (Mouse).